Here is a 476-residue protein sequence, read N- to C-terminus: Zinc transporter SLC39A7 (476 aa).

Residues 7–27 (APHWVAVGLLTWAALGLLVAG) traverse the membrane as a helical segment. Residues 35–109 (HKDVEEDFHG…SHGHSHDSLH (75 aa)) show a composition bias toward basic and acidic residues. Positions 35-131 (HKDVEEDFHG…HGTSREAGAP (97 aa)) are disordered. Histidine 73 bears the Pros-methylhistidine mark. Residues 110-120 (HGGHGHAHREH) are compositionally biased toward basic residues. Transmembrane regions (helical) follow at residues 146-166 (ALGATVLISAAPFFVLFLIPV), 177-197 (LQILLSFASGGLLGDAFLHLI), and 222-242 (GPILSVGLWVLSGIVAFLVVE). Residues 249 to 320 (KGGHGHSHGH…QSPEEEKAGS (72 aa)) form a disordered region. Residues 257 to 292 (GHGDRHAHGDSHTHGDRHECSSKEKPSTEEEKEVGG) show a composition bias toward basic and acidic residues. Serine 283 bears the Phosphoserine mark. Helical transmembrane passes span 393–413 (VTAIGALAGTACALLTEGGAV) and 417–437 (VAGGAGPGWVLPFTAGGFIYV).

It belongs to the ZIP transporter (TC 2.A.5) family. KE4/Catsup subfamily. Homodimer. In terms of processing, methylation at some His residue by METTL9 leads to reduced zinc-binding. Rapidly phosphorylated by CK2 following Zn(2+) treatment. This phosphorylation is required for efficient cytosolic Zn(2+) release. As to expression, widely expressed. Highly expressed in the intestinal crypts.

It localises to the endoplasmic reticulum membrane. It is found in the golgi apparatus. The protein localises to the cis-Golgi network membrane. The catalysed reaction is Zn(2+)(in) = Zn(2+)(out). Functionally, transports Zn(2+) from the endoplasmic reticulum (ER)/Golgi apparatus to the cytosol, playing an essential role in the regulation of cytosolic zinc levels. Acts as a gatekeeper of zinc release from intracellular stores, requiring post-translational activation by phosphorylation, resulting in activation of multiple downstream pathways leading to cell growth and proliferation. Has an essential role in B cell development and is required for proper B cell receptor signaling. Plays an important role in maintaining intestinal epithelial homeostasis and skin dermis development by regulating ER function. Controls cell signaling pathways involved in glucose metabolism in skeletal muscle. Has a protective role against ER stress in different biological contexts. Mediates Zn(2+)-induced ferroptosis. This Mus musculus (Mouse) protein is Zinc transporter SLC39A7 (Slc39a7).